Consider the following 142-residue polypeptide: Hydrogenase maturation factor HypA (142 aa).

His-2 is a Ni(2+) binding site. Residues Cys-73, Cys-76, Cys-109, and Cys-112 each contribute to the Zn(2+) site.

The protein belongs to the HypA/HybF family.

Its function is as follows. Involved in the maturation of [NiFe] hydrogenases. Required for nickel insertion into the metal center of the hydrogenase. This chain is Hydrogenase maturation factor HypA, found in Methanopyrus kandleri (strain AV19 / DSM 6324 / JCM 9639 / NBRC 100938).